The following is a 285-amino-acid chain: NAD kinase (285 aa).

Residue Asp-68 is the Proton acceptor of the active site. NAD(+) is bound by residues 68 to 69, 142 to 143, Arg-153, Lys-170, Asp-172, 183 to 188, and Gln-242; these read DG, ND, and TAYNLS.

The protein belongs to the NAD kinase family. A divalent metal cation is required as a cofactor.

The protein localises to the cytoplasm. The catalysed reaction is NAD(+) + ATP = ADP + NADP(+) + H(+). Involved in the regulation of the intracellular balance of NAD and NADP, and is a key enzyme in the biosynthesis of NADP. Catalyzes specifically the phosphorylation on 2'-hydroxyl of the adenosine moiety of NAD to yield NADP. The polypeptide is NAD kinase (Syntrophotalea carbinolica (strain DSM 2380 / NBRC 103641 / GraBd1) (Pelobacter carbinolicus)).